A 428-amino-acid chain; its full sequence is GTPase Obg (428 aa).

Positions 1 to 158 (MFIDIAKVFI…LSIVLELKLL (158 aa)) constitute an Obg domain. The region spanning 159-331 (ADVGLLGFPN…VIKEAARMLK (173 aa)) is the OBG-type G domain. GTP-binding positions include 165–172 (GFPNVGKS), 190–194 (FTTLK), 212–215 (DIPG), 282–285 (NKSD), and 312–314 (SAA). Residues S172 and T192 each coordinate Mg(2+). The OCT domain maps to 345-428 (MYIPEEKKFT…LNDFEFEYLL (84 aa)).

This sequence belongs to the TRAFAC class OBG-HflX-like GTPase superfamily. OBG GTPase family. In terms of assembly, monomer. The cofactor is Mg(2+).

It is found in the cytoplasm. An essential GTPase which binds GTP, GDP and possibly (p)ppGpp with moderate affinity, with high nucleotide exchange rates and a fairly low GTP hydrolysis rate. Plays a role in control of the cell cycle, stress response, ribosome biogenesis and in those bacteria that undergo differentiation, in morphogenesis control. The polypeptide is GTPase Obg (Clostridium botulinum (strain Alaska E43 / Type E3)).